The sequence spans 451 residues: tRNA-2-methylthio-N(6)-dimethylallyladenosine synthase (451 aa).

An MTTase N-terminal domain is found at 2–119 (QNLYIKTYGC…LPDLLDACLA (118 aa)). The [4Fe-4S] cluster site is built by cysteine 11, cysteine 48, cysteine 82, cysteine 157, cysteine 161, and cysteine 164. One can recognise a Radical SAM core domain in the interval 143 to 377 (GRDGATAFVT…RINGLAQGYA (235 aa)). The region spanning 378–441 (QALVGTQQAV…PNSLRGRAAL (64 aa)) is the TRAM domain.

It belongs to the methylthiotransferase family. MiaB subfamily. Monomer. The cofactor is [4Fe-4S] cluster.

Its subcellular location is the cytoplasm. The catalysed reaction is N(6)-dimethylallyladenosine(37) in tRNA + (sulfur carrier)-SH + AH2 + 2 S-adenosyl-L-methionine = 2-methylsulfanyl-N(6)-dimethylallyladenosine(37) in tRNA + (sulfur carrier)-H + 5'-deoxyadenosine + L-methionine + A + S-adenosyl-L-homocysteine + 2 H(+). Catalyzes the methylthiolation of N6-(dimethylallyl)adenosine (i(6)A), leading to the formation of 2-methylthio-N6-(dimethylallyl)adenosine (ms(2)i(6)A) at position 37 in tRNAs that read codons beginning with uridine. The sequence is that of tRNA-2-methylthio-N(6)-dimethylallyladenosine synthase from Acidithiobacillus ferrooxidans (strain ATCC 23270 / DSM 14882 / CIP 104768 / NCIMB 8455) (Ferrobacillus ferrooxidans (strain ATCC 23270)).